A 141-amino-acid polypeptide reads, in one-letter code: Alpha-lactalbumin (141 aa).

The first 19 residues, 1 to 19 (MMPLVPLLLVSIVFPGIQA), serve as a signal peptide directing secretion. The region spanning 20–141 (TQLTRCELTE…ENLEQWVCKK (122 aa)) is the C-type lysozyme domain. 4 disulfides stabilise this stretch: Cys25–Cys139, Cys47–Cys130, Cys80–Cys96, and Cys92–Cys110. Asn64 is a glycosylation site (N-linked (GlcNAc...) asparagine). Ca(2+)-binding residues include Asp101, Asp106, and Asp107.

The protein belongs to the glycosyl hydrolase 22 family. In terms of assembly, lactose synthase (LS) is a heterodimer of a catalytic component, beta1,4-galactosyltransferase (beta4Gal-T1) and a regulatory component, alpha-lactalbumin (LA). As to expression, mammary gland specific. Secreted in milk.

The protein resides in the secreted. Functionally, regulatory subunit of lactose synthase, changes the substrate specificity of galactosyltransferase in the mammary gland making glucose a good acceptor substrate for this enzyme. This enables LS to synthesize lactose, the major carbohydrate component of milk. In other tissues, galactosyltransferase transfers galactose onto the N-acetylglucosamine of the oligosaccharide chains in glycoproteins. The polypeptide is Alpha-lactalbumin (LALBA) (Oryctolagus cuniculus (Rabbit)).